The primary structure comprises 363 residues: Carbamoyl phosphate synthase small chain (363 aa).

CPSase regions lie at residues Met-1 to Gly-168 and Met-1 to Arg-172. L-glutamine is bound by residues Ser-46, Gly-220, and Gly-222. Positions Arg-172–Gly-359 constitute a Glutamine amidotransferase type-1 domain. The active-site Nucleophile is Cys-247. 5 residues coordinate L-glutamine: Leu-248, Gln-251, Asn-289, Gly-291, and Tyr-292. Catalysis depends on residues His-332 and Glu-334.

This sequence belongs to the CarA family. In terms of assembly, composed of two chains; the small (or glutamine) chain promotes the hydrolysis of glutamine to ammonia, which is used by the large (or ammonia) chain to synthesize carbamoyl phosphate. Tetramer of heterodimers (alpha,beta)4.

It carries out the reaction hydrogencarbonate + L-glutamine + 2 ATP + H2O = carbamoyl phosphate + L-glutamate + 2 ADP + phosphate + 2 H(+). It catalyses the reaction L-glutamine + H2O = L-glutamate + NH4(+). The protein operates within amino-acid biosynthesis; L-arginine biosynthesis; carbamoyl phosphate from bicarbonate: step 1/1. It participates in pyrimidine metabolism; UMP biosynthesis via de novo pathway; (S)-dihydroorotate from bicarbonate: step 1/3. Its function is as follows. Small subunit of the glutamine-dependent carbamoyl phosphate synthetase (CPSase). CPSase catalyzes the formation of carbamoyl phosphate from the ammonia moiety of glutamine, carbonate, and phosphate donated by ATP, constituting the first step of 2 biosynthetic pathways, one leading to arginine and/or urea and the other to pyrimidine nucleotides. The small subunit (glutamine amidotransferase) binds and cleaves glutamine to supply the large subunit with the substrate ammonia. The protein is Carbamoyl phosphate synthase small chain of Listeria innocua serovar 6a (strain ATCC BAA-680 / CLIP 11262).